Here is a 97-residue protein sequence, read N- to C-terminus: Large ribosomal subunit protein eL21 (97 aa).

The protein belongs to the eukaryotic ribosomal protein eL21 family.

This chain is Large ribosomal subunit protein eL21, found in Methanococcoides burtonii (strain DSM 6242 / NBRC 107633 / OCM 468 / ACE-M).